Here is a 710-residue protein sequence, read N- to C-terminus: Ferrioxamine receptor (710 aa).

The signal sequence occupies residues 1-26 (MFSAFIIKRSAILCSLAMFIPLASIA). A TonB box motif is present at residues 28–35 (DTIEVTAK). The next 30 membrane-spanning stretches (beta stranded) occupy residues 29–37 (TIEVTAKAG), 65–73 (TAQSVSVVT), 91–99 (YTPGVFTGF), 106–114 (YDTVALRGF), 137–145 (NVLQVDPWF), 152–160 (IKGPSSALY), 180–188 (SEGHFRLTA), 194–202 (QVAAFDYTD), 208–216 (WAFRLTGIT), 259–267 (GGYHSAVPA), 271–279 (IYGQKLSRG), 293–301 (WQQIYSYEF), 309–317 (WSFRQNASY), 353–361 (FAVDNQLEA), 370–378 (HKVLLGVDF), 427–435 (YEQSGVYLQ), 443–451 (WHLNLSGRY), 476–484 (GRASLLYSF), 491–499 (YVSYSQAIT), 517–525 (EQYEVGIIY), 531–539 (TSLYSAALY), 555–563 (YYVPAGKVN), 567–575 (LELEARSQI), 579–587 (LSVIAGYTY), 610–618 (NMASLWAQY), 624–632 (INVGAGIRY), 649–657 (YTLGDASVR), 671–679 (FVQLNVNNI), 684–692 (YVAACYSTS), and 702–710 (VQATVGYDF). One can recognise a TBDR plug domain in the interval 61 to 174 (PLILTAQSVS…PGGVVMMTSK (114 aa)). The region spanning 181–710 (EGHFRLTAGN…SVQATVGYDF (530 aa)) is the TBDR beta-barrel domain. Residues 693–710 (YCYWGAERSVQATVGYDF) carry the TonB C-terminal box motif.

It belongs to the TonB-dependent receptor family.

Its subcellular location is the cell outer membrane. Functionally, ferrioxamine binding and uptake, in association with the TonB protein. This is Ferrioxamine receptor (foxA) from Yersinia enterocolitica.